We begin with the raw amino-acid sequence, 287 residues long: Polyamine aminopropyltransferase (287 aa).

A PABS domain is found at 9 to 242 (GSWLDEYQND…GIWSWTFASI (234 aa)). Gln36 provides a ligand contact to S-methyl-5'-thioadenosine. Residues His67 and Asp91 each contribute to the spermidine site. Residues Glu111 and 143-144 (NG) contribute to the S-methyl-5'-thioadenosine site. Asp162 serves as the catalytic Proton acceptor. Pro169 provides a ligand contact to S-methyl-5'-thioadenosine.

It belongs to the spermidine/spermine synthase family. Homodimer or homotetramer.

It is found in the cytoplasm. It carries out the reaction S-adenosyl 3-(methylsulfanyl)propylamine + putrescine = S-methyl-5'-thioadenosine + spermidine + H(+). The protein operates within amine and polyamine biosynthesis; spermidine biosynthesis; spermidine from putrescine: step 1/1. Functionally, catalyzes the irreversible transfer of a propylamine group from the amino donor S-adenosylmethioninamine (decarboxy-AdoMet) to putrescine (1,4-diaminobutane) to yield spermidine. This Prochlorococcus marinus (strain SARG / CCMP1375 / SS120) protein is Polyamine aminopropyltransferase.